A 339-amino-acid chain; its full sequence is FR-33289 synthase (339 aa).

Fe(2+)-binding residues include histidine 150, aspartate 152, and histidine 288.

It belongs to the TfdA dioxygenase family. In terms of assembly, homodimer. The cofactor is Fe(2+).

It carries out the reaction 3-(N-acetyl-N-hydroxy)aminopropylphosphonate + 2-oxoglutarate + O2 = (R)-(3-(acetylhydroxyamino)-2-hydroxypropyl)phosphonate + succinate + CO2. Its pathway is antibiotic biosynthesis. In terms of biological role, monooxygenase involved in the biosynthesis of the phosphonate antibiotic FR-33289, an antimalarial agent. Catalyzes the oxidative decarboxylation of the antibiotic FR-900098 (3-(N-acetyl-N-hydroxy)aminopropylphosphonate) to form FR-33289 ((R)-(3-(acetylhydroxyamino)-2-hydroxypropyl)phosphonate). In Streptomyces rubellomurinus (strain ATCC 31215), this protein is FR-33289 synthase.